The following is an 802-amino-acid chain: MANTKKTTLDITGMTCAACSNRIEKKLNKLDDVNAQVNLTTEKATVEYNPDQHDVQEFINTIQHLGYGVAVETVELDITGMTCAACSSRIEKVLNKMDGVQNATVNLTTEQAKVDYYPEETDADKLVTRIQKLGYDASIKDNNKDQTSRKAEALQHKLIKLIISAVLSLPLLMLMFVHLFNMHIPALFTNPWFQFILATPVQFIIGWQFYVGAYKNLRNGGANMDVLVAVGTSAAYFYSIYEMVRWLNGSTTQPHLYFETSAVLITLILFGKYLEARAKSQTTNALGELLSLQAKEARILKDGNEVMIPLNEVHVGDTLIVKPGEKIPVDGKIIKGMTAIDESMLTGESIPVEKNVDDTVIGSTMNKNGTITMTATKVGGDTALANIIKVVEEAQSSKAPIQRLADIISGYFVPIVVGIALLTFIVWITLVTPGTFEPALVASISVLVIACPCALGLATPTSIMVGTGRAAENGILFKGGEFVERTHQIDTIVLDKTGTITNGRPVVTDYHGDNQTLQLLATAEKDSEHPLAEAIVNYAKEKQLILTETTTFKAVPGHGIEATIDHHHILVGNRKLMADNDISLPKHISDDLTHYERDGKTAMLIAVNYSLTGIIAVADTVKDHAKDAIKQLHDMGIEVAMLTGDNKNTAQAIAKQVGIDTVIADILPEEKAAQIAKLQQQGKKVAMVGDGVNDAPALVKADIGIAIGTGTEVAIEAADITILGGDLMLIPKAIYASKATIRNIRQNLFWAFGYNIAGIPIAALGLLAPWVAGAAMALSSVSVVTNALRLKKMRLEPRRKDA.

2 HMA domains span residues 5–70 (KKTT…YGVA) and 72–138 (ETVE…YDAS). Cys16, Cys19, Cys83, and Cys86 together coordinate Cu(+). Transmembrane regions (helical) follow at residues 161–181 (LIISAVLSLPLLMLMFVHLFN), 192–212 (WFQFILATPVQFIIGWQFYVG), 224–244 (MDVLVAVGTSAAYFYSIYEMV), 256–276 (LYFETSAVLITLILFGKYLEA), 411–431 (YFVPIVVGIALLTFIVWITLV), and 438–458 (PALVASISVLVIACPCALGLA). Asp495 (4-aspartylphosphate intermediate) is an active-site residue. Residues Asp690 and Asp694 each coordinate Mg(2+). The next 2 membrane-spanning stretches (helical) occupy residues 748 to 767 (LFWAFGYNIAGIPIAALGLL) and 771 to 790 (VAGAAMALSSVSVVTNALRL).

The protein belongs to the cation transport ATPase (P-type) (TC 3.A.3) family. Type IB subfamily.

The protein localises to the cell membrane. It carries out the reaction Cu(+)(in) + ATP + H2O = Cu(+)(out) + ADP + phosphate + H(+). Its function is as follows. Involved in copper export. In Staphylococcus aureus (strain COL), this protein is Copper-exporting P-type ATPase (copA).